Reading from the N-terminus, the 345-residue chain is Delta(6)-protoilludene synthase (345 aa).

Mg(2+) contacts are provided by aspartate 84, asparagine 220, serine 224, and glutamate 228. A DDXXD motif motif is present at residues 84–88 (DEYSD). Residues arginine 309 and tyrosine 310 each contribute to the (2E,6E)-farnesyl diphosphate site.

This sequence belongs to the terpene synthase family. In terms of assembly, monomer. Requires Mg(2+) as cofactor.

It carries out the reaction (2E,6E)-farnesyl diphosphate = Delta(6)-protoilludene + diphosphate. Its pathway is secondary metabolite biosynthesis. Its function is as follows. Delta(6)-protoilludene synthase, part of the gene cluster that mediates the biosynthesis of melleolides, a range of antifungal and phytotoxic polyketide derivatives composed of an orsellinic acid (OA) moiety esterified to various sesquiterpene alcohols. The first step in melleolides biosynthesis is performed by the delta(6)-protoilludene synthase PRO1 which catalyzes the cyclization of farnesyl diphosphate to protoilludene. The orsellinic acid synthase armB produces OA by condensing acetyl-CoA with 3 malonyl-CoA units in a three-round chain elongation reaction folowed by a C2-C7 ring closure. ArmB further catalyzes the trans-esterification of OA to the various sesquiterpene alcohols resulting from the hydroxylation of protoilludene. The melleolides cluster also includes 5 cytochrome P450 monooxygenases, 4 NAD(+)-dependent oxidoreductases, one flavin-dependent oxidoreductase, and one O-methyltransferase. The cytochrome P450 monooxygenases may be involved in protoilludene hydroxylation to elaborate melleolides with multiple alcohol groups, such as melleolide D, which carries alcohol functionalities at C-4, C-5, C-10, and C-13. The role of the NAD(+)-dependent enzymes remains unknown. Numerous melleolides, including arnamial, show 5'-O-methylation of the aromatic moiety which may be catalyzed by the methyltransferase encoded in the cluster. The flavin-dependent oxidoreductase might represent the dehydrogenase yielding the aldehyde in position 1 of arnamial and other melleolides. Finally, several halogenases, localized outside of the cluster, are able to catalyze the transfer of a single chlorine atom to the melleolide backbone, resulting in a 6'-chloromelleolide product. This is Delta(6)-protoilludene synthase from Armillaria gallica (Bulbous honey fungus).